A 386-amino-acid chain; its full sequence is Na(+)/H(+) antiporter NhaA (386 aa).

The next 11 helical transmembrane spans lie at 10 to 30 (MGSASGILLFFFALLAIIFAN), 58 to 78 (LLHWINDGFMAVFFVLVGLEV), 94 to 114 (IFPAVAAIGGMIVPALIYYLI), 124 to 144 (GWAIPMATDIAFALGIVALLG), 154 to 174 (FLLALAIIDDLGAIVVIAVFF), 176 to 196 (EELSIQALSVAIVAIAGLITL), 199 to 219 (MKVGHLCAYLIFGLILWAAVL), 253 to 273 (ILTPWCSFFVLPLFAFANAGV), 283 to 303 (IFSTLPLGIALGLIVGKPLGV), 327 to 347 (VFAIAILCGIGFTMSMFLAGL), and 361 to 381 (LSRLGILLGSSVSAILGYLLL).

Belongs to the NhaA Na(+)/H(+) (TC 2.A.33) antiporter family.

The protein localises to the cell inner membrane. It carries out the reaction Na(+)(in) + 2 H(+)(out) = Na(+)(out) + 2 H(+)(in). Its function is as follows. Na(+)/H(+) antiporter that extrudes sodium in exchange for external protons. The protein is Na(+)/H(+) antiporter NhaA of Mannheimia succiniciproducens (strain KCTC 0769BP / MBEL55E).